The sequence spans 642 residues: tRNA uridine 5-carboxymethylaminomethyl modification enzyme MnmG (642 aa).

Residue 24–29 (GGGHAG) coordinates FAD. 284-298 (GPRYCPSIEDKIHRF) is a binding site for NAD(+).

This sequence belongs to the MnmG family. In terms of assembly, homodimer. Heterotetramer of two MnmE and two MnmG subunits. FAD is required as a cofactor.

It localises to the cytoplasm. In terms of biological role, NAD-binding protein involved in the addition of a carboxymethylaminomethyl (cmnm) group at the wobble position (U34) of certain tRNAs, forming tRNA-cmnm(5)s(2)U34. This chain is tRNA uridine 5-carboxymethylaminomethyl modification enzyme MnmG, found in Psychrobacter sp. (strain PRwf-1).